The chain runs to 359 residues: Cytoplasmic tRNA 2-thiolation protein 1 (359 aa).

The protein belongs to the TtcA family. CTU1/NCS6/ATPBD3 subfamily. In terms of assembly, interacts with NCS2 and URM1. May act by forming a heterodimer with NCS2. Component of a large molecular weight complex of more than 250 kDa.

The protein resides in the cytoplasm. It localises to the mitochondrion. It participates in tRNA modification; 5-methoxycarbonylmethyl-2-thiouridine-tRNA biosynthesis. Its function is as follows. Plays a central role in 2-thiolation of mcm(5)S(2)U at tRNA wobble positions of tRNA(Lys), tRNA(Glu) and tRNA(Gln). Directly binds tRNAs and probably acts by catalyzing adenylation of tRNAs, an intermediate required for 2-thiolation. It is unclear whether it acts as a sulfurtransferase that transfers sulfur from thiocarboxylated URM1 onto the uridine of tRNAs at wobble position. Prior mcm(5) tRNA modification by the elongator complex is required for 2-thiolation. May also be involved in protein urmylation. This chain is Cytoplasmic tRNA 2-thiolation protein 1, found in Saccharomyces cerevisiae (strain RM11-1a) (Baker's yeast).